The primary structure comprises 198 residues: Recombination protein RecR (198 aa).

The C4-type zinc finger occupies 58 to 73; it reads CSVCGNFTDKDPCAIC. In terms of domain architecture, Toprim spans 81-175; the sequence is SIICVIEQPK…KVTRIAHGVP (95 aa).

It belongs to the RecR family.

In terms of biological role, may play a role in DNA repair. It seems to be involved in an RecBC-independent recombinational process of DNA repair. It may act with RecF and RecO. This is Recombination protein RecR from Clostridium botulinum (strain ATCC 19397 / Type A).